Here is a 429-residue protein sequence, read N- to C-terminus: UDP-N-acetylglucosamine 1-carboxyvinyltransferase (429 aa).

22–23 contacts phosphoenolpyruvate; it reads KN. Arg-102 is a binding site for UDP-N-acetyl-alpha-D-glucosamine. Cys-126 serves as the catalytic Proton donor. Cys-126 bears the 2-(S-cysteinyl)pyruvic acid O-phosphothioketal mark. UDP-N-acetyl-alpha-D-glucosamine is bound by residues 131–135, Asp-316, and Ile-338; that span reads RPVDL.

It belongs to the EPSP synthase family. MurA subfamily.

The protein localises to the cytoplasm. The catalysed reaction is phosphoenolpyruvate + UDP-N-acetyl-alpha-D-glucosamine = UDP-N-acetyl-3-O-(1-carboxyvinyl)-alpha-D-glucosamine + phosphate. Its pathway is cell wall biogenesis; peptidoglycan biosynthesis. Functionally, cell wall formation. Adds enolpyruvyl to UDP-N-acetylglucosamine. This is UDP-N-acetylglucosamine 1-carboxyvinyltransferase from Rhodopseudomonas palustris (strain BisB5).